Reading from the N-terminus, the 219-residue chain is Thiamine-phosphate synthase (219 aa).

4-amino-2-methyl-5-(diphosphooxymethyl)pyrimidine is bound by residues 48–52 (QFRQK) and N84. 2 residues coordinate Mg(2+): D85 and D104. 4-amino-2-methyl-5-(diphosphooxymethyl)pyrimidine is bound at residue S123. 150–152 (TPS) serves as a coordination point for 2-[(2R,5Z)-2-carboxy-4-methylthiazol-5(2H)-ylidene]ethyl phosphate. K153 is a 4-amino-2-methyl-5-(diphosphooxymethyl)pyrimidine binding site. 2-[(2R,5Z)-2-carboxy-4-methylthiazol-5(2H)-ylidene]ethyl phosphate-binding positions include G181 and 199–200 (IS).

This sequence belongs to the thiamine-phosphate synthase family. Requires Mg(2+) as cofactor.

It catalyses the reaction 2-[(2R,5Z)-2-carboxy-4-methylthiazol-5(2H)-ylidene]ethyl phosphate + 4-amino-2-methyl-5-(diphosphooxymethyl)pyrimidine + 2 H(+) = thiamine phosphate + CO2 + diphosphate. It carries out the reaction 2-(2-carboxy-4-methylthiazol-5-yl)ethyl phosphate + 4-amino-2-methyl-5-(diphosphooxymethyl)pyrimidine + 2 H(+) = thiamine phosphate + CO2 + diphosphate. The enzyme catalyses 4-methyl-5-(2-phosphooxyethyl)-thiazole + 4-amino-2-methyl-5-(diphosphooxymethyl)pyrimidine + H(+) = thiamine phosphate + diphosphate. It functions in the pathway cofactor biosynthesis; thiamine diphosphate biosynthesis; thiamine phosphate from 4-amino-2-methyl-5-diphosphomethylpyrimidine and 4-methyl-5-(2-phosphoethyl)-thiazole: step 1/1. Its function is as follows. Condenses 4-methyl-5-(beta-hydroxyethyl)thiazole monophosphate (THZ-P) and 2-methyl-4-amino-5-hydroxymethyl pyrimidine pyrophosphate (HMP-PP) to form thiamine monophosphate (TMP). This Helicobacter pylori (strain HPAG1) protein is Thiamine-phosphate synthase.